The chain runs to 147 residues: uncharacterized protein (147 aa).

This is an uncharacterized protein from Mycoplasma pneumoniae (strain ATCC 29342 / M129 / Subtype 1) (Mycoplasmoides pneumoniae).